The chain runs to 246 residues: Bis(5'-nucleosyl)-tetraphosphatase PrpE [asymmetrical] (246 aa).

Belongs to the PrpE family. The cofactor is Ni(2+).

It carries out the reaction P(1),P(4)-bis(5'-guanosyl) tetraphosphate + H2O = GMP + GTP + 2 H(+). In terms of biological role, asymmetrically hydrolyzes Ap4p to yield AMP and ATP. The protein is Bis(5'-nucleosyl)-tetraphosphatase PrpE [asymmetrical] of Bacillus cereus (strain ATCC 10987 / NRS 248).